We begin with the raw amino-acid sequence, 218 residues long: GTP cyclohydrolase 1 (218 aa).

Residues cysteine 109, histidine 112, and cysteine 180 each contribute to the Zn(2+) site.

It belongs to the GTP cyclohydrolase I family. As to quaternary structure, toroid-shaped homodecamer, composed of two pentamers of five dimers.

The catalysed reaction is GTP + H2O = 7,8-dihydroneopterin 3'-triphosphate + formate + H(+). It functions in the pathway cofactor biosynthesis; 7,8-dihydroneopterin triphosphate biosynthesis; 7,8-dihydroneopterin triphosphate from GTP: step 1/1. The polypeptide is GTP cyclohydrolase 1 (Mannheimia succiniciproducens (strain KCTC 0769BP / MBEL55E)).